The chain runs to 127 residues: Aspartate 1-decarboxylase (127 aa).

Residue Ser-25 is the Schiff-base intermediate with substrate; via pyruvic acid of the active site. Ser-25 carries the post-translational modification Pyruvic acid (Ser). Thr-57 is a binding site for substrate. Residue Tyr-58 is the Proton donor of the active site. 73–75 (GAA) contributes to the substrate binding site.

It belongs to the PanD family. In terms of assembly, heterooctamer of four alpha and four beta subunits. It depends on pyruvate as a cofactor. Post-translationally, is synthesized initially as an inactive proenzyme, which is activated by self-cleavage at a specific serine bond to produce a beta-subunit with a hydroxyl group at its C-terminus and an alpha-subunit with a pyruvoyl group at its N-terminus.

It is found in the cytoplasm. The catalysed reaction is L-aspartate + H(+) = beta-alanine + CO2. Its pathway is cofactor biosynthesis; (R)-pantothenate biosynthesis; beta-alanine from L-aspartate: step 1/1. Its function is as follows. Catalyzes the pyruvoyl-dependent decarboxylation of aspartate to produce beta-alanine. The sequence is that of Aspartate 1-decarboxylase from Shouchella clausii (strain KSM-K16) (Alkalihalobacillus clausii).